The sequence spans 135 residues: Large ribosomal subunit protein uL16c (135 aa).

Belongs to the universal ribosomal protein uL16 family. As to quaternary structure, part of the 50S ribosomal subunit.

The protein resides in the plastid. It localises to the chloroplast. This Vitis vinifera (Grape) protein is Large ribosomal subunit protein uL16c.